Consider the following 66-residue polypeptide: Large ribosomal subunit protein uL29 (66 aa).

It belongs to the universal ribosomal protein uL29 family.

This Ruegeria pomeroyi (strain ATCC 700808 / DSM 15171 / DSS-3) (Silicibacter pomeroyi) protein is Large ribosomal subunit protein uL29.